We begin with the raw amino-acid sequence, 83 residues long: RNA-binding protein Hfq (83 aa).

One can recognise a Sm domain in the interval 10 to 70; it reads DAFLNQVRKE…ISTVSPLKPV (61 aa).

The protein belongs to the Hfq family. In terms of assembly, homohexamer.

RNA chaperone that binds small regulatory RNA (sRNAs) and mRNAs to facilitate mRNA translational regulation in response to envelope stress, environmental stress and changes in metabolite concentrations. Also binds with high specificity to tRNAs. The sequence is that of RNA-binding protein Hfq from Pelotomaculum thermopropionicum (strain DSM 13744 / JCM 10971 / SI).